The chain runs to 750 residues: Nibrin (750 aa).

The FHA domain occupies tyrosine 24–methionine 83. 2 BRCT domains span residues lysine 105–leucine 181 and glycine 224–isoleucine 315. The segment at glutamate 111–glutamine 328 is mediates interaction with SP100. Residues isoleucine 221–asparagine 403 are interaction with MTOR, MAPKAP1 and RICTOR. Threonine 337 is subject to Phosphothreonine. Residue serine 343 is modified to Phosphoserine; by ATM. A phosphoserine mark is found at serine 347 and serine 433. Disordered regions lie at residues asparagine 429–lysine 479 and glutamine 494–lysine 550. A Glycyl lysine isopeptide (Lys-Gly) (interchain with G-Cter in ubiquitin) cross-link involves residue lysine 436. The span at tryptophan 446–asparagine 457 shows a compositional bias: polar residues. The Nuclear localization signal motif lies at proline 461–glutamate 467. A compositionally biased stretch (basic and acidic residues) spans lysine 502–aspartate 514. 2 positions are modified to phosphoserine: serine 508 and serine 517. Lysine 528 participates in a covalent cross-link: Glycyl lysine isopeptide (Lys-Gly) (interchain with G-Cter in SUMO2). Positions serine 540–lysine 550 are enriched in basic and acidic residues. Residues lysine 569 and lysine 580 each participate in a glycyl lysine isopeptide (Lys-Gly) (interchain with G-Cter in SUMO2) cross-link. The segment covering glutamine 581–glutamine 599 has biased composition (basic and acidic residues). Positions glutamine 581–aspartate 622 are disordered. Residues lysine 683, lysine 687, and lysine 732 each participate in a glycyl lysine isopeptide (Lys-Gly) (interchain with G-Cter in ubiquitin) cross-link. Positions alanine 737–asparagine 746 match the FxF/Y motif motif.

This sequence belongs to the Nibrin family. In terms of assembly, component of the MRN complex composed of two heterodimers RAD50 and MRE11 associated with a single NBN. The MRN complexes dimerize on DNA to form joined MRN-MRN oligomers required for DNA double-strand break repair. The MRN complexes dimerize on DNA to form joined MRN-MRN oligomers required for DNA double-strand break repair. As part of the MRN complex, interacts with MCM9; the interaction recruits the complex to DNA repair sites. Component of the BASC complex, at least composed of BRCA1, MSH2, MSH6, MLH1, ATM, BLM, RAD50, MRE11 and NBN. Interacts with histone H2AX; this requires phosphorylation of H2AX on 'Ser-139' and promotes NBN recruitment to DNA damage sites. Interacts with (phosphorylated) MDC1; promoting NBN recruitment to DNA damage sites. Interacts with (phosphorylated) RAD17; promoting NBN recruitment to DNA damage sites. Interacts (via FxF/Y motif) with ATM. Interacts with HJURP. Interacts with INTS3. Interacts with KPNA2. Interacts with TERF2; interaction is disrupted upon NBN phosphorylation by CDK2. Interacts with (phosphorylated) RBBP8/CtIP; the interaction links the role of the MRN complex in DNA double-strand break sensing to resection. Interacts with SP100; recruits NBN to PML bodies. Interacts with ATF2. Interacts with MTOR, MAPKAP1 isoform 2 and RICTOR; indicative for an association with the mTORC2 complex. Interacts with MRNIP. Interacts with UFL1; promoting UFL1 recruitment to double-strand breaks following DNA damage. Interacts with CYREN (via XLF motif). In terms of processing, phosphorylated by ATM in response of ionizing radiation, and such phosphorylation is responsible intra-S phase checkpoint control and telomere maintenance. Phosphorylated at Ser-433 by CDK2 in S/G2 phases abolishes interaction with TERF2, enabling DCLRE1B/Apollo recruitment to telomeres. Phosphorylation at Ser-433 in response to dysfunctional telomeres promotes non-homologous end joining repair at telomeres, while dephosphorylation by PPP1CA promotes microhomology-mediated end-joining (MMEJ) repair. Ubiquitinated at Lys-436 via 'Lys-6'-linked ubiquitin chains by RNF8, promoting NBN recruitment to DNA double-strand breaks (DSBs). Ubiquitinated at Lys-687 via 'Lys-63'-linked ubiquitin chains by PELI1: ubiquitination takes place following PELI1 phosphorylation and promotes ATM activation and DNA repair. Ubiquitinated at Lys-732 via 'Lys-63'-linked ubiquitin chains by the SCF(SKP2) complex: ubiquitination takes place following SKP2 phosphorylation and promotes ATM activation and DNA repair. Present at approximately equal levels in the heart at fetal day 17, at relatively constant levels at postnatal days 10, 17 and 21 and at slightly lower levels in the adult heart. Barely detectable in the brain. Not detected in kidney, very low levels in liver and skeletal muscle and moderate levels in heart, lung and brain (at protein level).

The protein localises to the nucleus. It is found in the chromosome. Its subcellular location is the PML body. It localises to the telomere. Functionally, component of the MRN complex, which plays a central role in double-strand break (DSB) repair, DNA recombination, maintenance of telomere integrity and meiosis. The MRN complex is involved in the repair of DNA double-strand breaks (DSBs) via homologous recombination (HR), an error-free mechanism which primarily occurs during S and G2 phases. The complex (1) mediates the end resection of damaged DNA, which generates proper single-stranded DNA, a key initial steps in HR, and is (2) required for the recruitment of other repair factors and efficient activation of ATM and ATR upon DNA damage. The MRN complex possesses single-strand endonuclease activity and double-strand-specific 3'-5' exonuclease activity, which are provided by MRE11, to initiate end resection, which is required for single-strand invasion and recombination. Within the MRN complex, NBN acts as a protein-protein adapter, which specifically recognizes and binds phosphorylated proteins, promoting their recruitment to DNA damage sites. Recruits MRE11 and RAD50 components of the MRN complex to DSBs in response to DNA damage. Promotes the recruitment of PI3/PI4-kinase family members ATM, ATR, and probably DNA-PKcs to the DNA damage sites, activating their functions. Mediates the recruitment of phosphorylated RBBP8/CtIP to DSBs, leading to cooperation between the MRN complex and RBBP8/CtIP to initiate end resection. RBBP8/CtIP specifically promotes the endonuclease activity of the MRN complex to clear DNA ends containing protein adducts. The MRN complex is also required for the processing of R-loops. NBN also functions in telomere length maintenance via its interaction with TERF2: interaction with TERF2 during G1 phase preventing recruitment of DCLRE1B/Apollo to telomeres. NBN also promotes DNA repair choice at dysfunctional telomeres: NBN phosphorylation by CK2 promotes non-homologous end joining repair at telomeres, while unphosphorylated NBN promotes microhomology-mediated end-joining (MMEJ) repair. Enhances AKT1 phosphorylation possibly by association with the mTORC2 complex. In Rattus norvegicus (Rat), this protein is Nibrin (Nbn).